The chain runs to 365 residues: PHD finger protein 6 (365 aa).

Ser2 bears the N-acetylserine mark. 2 short sequence motifs (nuclear localization signal) span residues Arg13–Lys16 and Arg129–Lys133. Residues Gln14–Leu52 form a C2HC pre-PHD-type 1 zinc finger. The extended PHD1 domain (ePHD1) stretch occupies residues Gln14–Lys132. A PHD-type 1 zinc finger spans residues Leu80–Lys132. Phosphoserine occurs at positions 138, 145, and 155. Residues Glu139–Lys211 are disordered. The Nucleolar localization signal motif lies at Lys157–Lys169. Over residues Lys157–Asn171 the composition is skewed to basic residues. A Glycyl lysine isopeptide (Lys-Gly) (interchain with G-Cter in SUMO2) cross-link involves residue Lys173. 2 positions are modified to phosphoserine: Ser183 and Ser199. A C2HC pre-PHD-type 2 zinc finger spans residues Arg209–Thr249. Residues Arg209–Ser330 are extended PHD2 domain (ePHD2). Residue Lys227 forms a Glycyl lysine isopeptide (Lys-Gly) (interchain with G-Cter in SUMO2) linkage. A PHD-type 2 zinc finger spans residues Met278–Ser330. The disordered stretch occupies residues Ser330 to Asn365. A compositionally biased stretch (basic and acidic residues) spans Arg342–Ile352. The span at Gln354 to Asn365 shows a compositional bias: low complexity. Position 358 is a phosphothreonine (Thr358).

In terms of assembly, interacts with UBTF. Interacts with the NuRD complex component RBBP4 (via the nucleolar localization motif), the interaction mediates transcriptional repression activity.

The protein resides in the nucleus. The protein localises to the nucleolus. Its subcellular location is the chromosome. It is found in the centromere. It localises to the kinetochore. Its function is as follows. Transcriptional regulator that associates with ribosomal RNA promoters and suppresses ribosomal RNA (rRNA) transcription. The protein is PHD finger protein 6 (PHF6) of Pongo abelii (Sumatran orangutan).